The chain runs to 422 residues: Elongator complex protein 4 (422 aa).

The disordered stretch occupies residues 1–49; the sequence is MAAADTCGAGTLSSRSVASEAGQGGTSSFQRKGKASGGPGGGPRLLSIA.

It belongs to the ELP4 family. As to quaternary structure, component of the elongator complex which consists of ELP1, ELP2, ELP3, ELP4, ELP5 and ELP6. Expressed throughout the cerebellum.

Its subcellular location is the cytoplasm. The protein localises to the nucleus. It participates in tRNA modification; 5-methoxycarbonylmethyl-2-thiouridine-tRNA biosynthesis. Component of the elongator complex which is required for multiple tRNA modifications, including mcm5U (5-methoxycarbonylmethyl uridine), mcm5s2U (5-methoxycarbonylmethyl-2-thiouridine), and ncm5U (5-carbamoylmethyl uridine). The elongator complex catalyzes the formation of carboxymethyluridine in the wobble base at position 34 in tRNAs. The chain is Elongator complex protein 4 (Elp4) from Mus musculus (Mouse).